We begin with the raw amino-acid sequence, 421 residues long: Ethanolamine-phosphate cytidylyltransferase (421 aa).

Residues 8-28 (IVGSCIVGGAAFAVGASFLHL) form a helical membrane-spanning segment. The disordered stretch occupies residues 203 to 227 (SRSSLQRQFSHGHSSPKFEDGASSA). Over residues 204 to 215 (RSSLQRQFSHGH) the composition is skewed to polar residues. CTP is bound by residues 262 to 263 (AF), 270 to 273 (HVEI), arginine 298, 346 to 349 (HGTV), and 377 to 381 (SPLDI). The segment at 402-421 (AKKEASEKKYYEQKSFVSGD) is disordered. Residues 403 to 413 (KKEASEKKYYE) show a composition bias toward basic and acidic residues. Serine 416 carries the phosphoserine modification.

Belongs to the cytidylyltransferase family. Expressed in root tip, lateral root primordia, leaves, shoot apex, stem vascular bundles, pollen and embryos.

The protein resides in the mitochondrion outer membrane. The enzyme catalyses phosphoethanolamine + CTP + H(+) = CDP-ethanolamine + diphosphate. It functions in the pathway phospholipid metabolism; phosphatidylethanolamine biosynthesis; phosphatidylethanolamine from ethanolamine: step 2/3. Functionally, plays an important role in the biosynthesis of the phospholipid phosphatidylethanolamine. Catalyzes the formation of CDP-ethanolamine. Essential for early embryonic development. The polypeptide is Ethanolamine-phosphate cytidylyltransferase (Arabidopsis thaliana (Mouse-ear cress)).